The primary structure comprises 294 residues: tRNA dimethylallyltransferase (294 aa).

An ATP-binding site is contributed by 10 to 17; that stretch reads GPTAVGKT. Residue 12–17 coordinates substrate; sequence TAVGKT. Residues 35 to 38 are interaction with substrate tRNA; it reads DSQQ.

It belongs to the IPP transferase family. In terms of assembly, monomer. Mg(2+) is required as a cofactor.

It catalyses the reaction adenosine(37) in tRNA + dimethylallyl diphosphate = N(6)-dimethylallyladenosine(37) in tRNA + diphosphate. In terms of biological role, catalyzes the transfer of a dimethylallyl group onto the adenine at position 37 in tRNAs that read codons beginning with uridine, leading to the formation of N6-(dimethylallyl)adenosine (i(6)A). This chain is tRNA dimethylallyltransferase, found in Streptococcus pneumoniae serotype 4 (strain ATCC BAA-334 / TIGR4).